The primary structure comprises 242 residues: Immunity protein TsiV2 (242 aa).

3 consecutive transmembrane segments (helical) span residues 39–59, 66–86, and 118–138; these read VFGAISAGIVPLWPFIFFADI, FWGFICFSLAGMAAARYLFMP, and FAWVGIAVCLLALAVVGPLAF.

It localises to the host membrane. Functionally, immunity protein that plays a role in preventing early activation of toxin VasX. In Vibrio cholerae serotype O1 (strain ATCC 39315 / El Tor Inaba N16961), this protein is Immunity protein TsiV2.